Reading from the N-terminus, the 345-residue chain is MSSIRVGIVGASGYSGEELIRLLVRHPGVDLRWITSRQYKDRTLQSVYPGIGRFGELEFDDLESLEKKENQLELVFLALPHGAGMDYAHFFYNRGKVVIDLSADFRLENPLDYELYYKLSHPHADLLKKAVYALPEIYPDQIAHSNLLAMPGCYPTAVLLSLAPFLKKGWIDPHSIEIVALSGSTGAGKTLDTKLLFSELADNLRPYSFPSHRHIPEMEQQIAKLVKTDSVKVIFLPILAPLRRGILLTVIGSLSQPISQAEAEEQAQEFYKEAPFVKILPGGIMPELRYVLYSNNLYFSIHVLEEKKKLLILAAIDNLGKGAAGQAIQVMNIRLGWAQTLGLIP.

C153 is an active-site residue.

This sequence belongs to the NAGSA dehydrogenase family. Type 1 subfamily.

The protein resides in the cytoplasm. It carries out the reaction N-acetyl-L-glutamate 5-semialdehyde + phosphate + NADP(+) = N-acetyl-L-glutamyl 5-phosphate + NADPH + H(+). It participates in amino-acid biosynthesis; L-arginine biosynthesis; N(2)-acetyl-L-ornithine from L-glutamate: step 3/4. Catalyzes the NADPH-dependent reduction of N-acetyl-5-glutamyl phosphate to yield N-acetyl-L-glutamate 5-semialdehyde. This chain is N-acetyl-gamma-glutamyl-phosphate reductase, found in Methylacidiphilum infernorum (isolate V4) (Methylokorus infernorum (strain V4)).